The primary structure comprises 363 residues: Cyanuric acid amidohydrolase (363 aa).

The tract at residues 1–104 (MYHIDVFRIP…TVFARRPAID (104 aa)) is RU A. Substrate contacts are provided by residues R52 and 83–84 (SG). An RU B region spans residues 112 to 249 (RLTLGIAFTR…NVVIAIGMSE (138 aa)). K162 is an active-site residue. Substrate is bound by residues R194 and 232–233 (SA). S232 functions as the Nucleophile in the catalytic mechanism. Residues 255–363 (LVIAHGVMSD…GGPFAVIARA (109 aa)) form an RU C region. E297 provides a ligand contact to Mg(2+). Substrate contacts are provided by residues R324 and 343–344 (SG). Mg(2+) is bound by residues A346, Q349, G350, P351, and G354.

It belongs to the cyclic amide hydrolase (CyAH) family. As to quaternary structure, homotetramer.

The enzyme catalyses cyanurate + H2O = 1-carboxybiuret + H(+). It functions in the pathway xenobiotic degradation; atrazine degradation; biuret from cyanurate: step 1/1. Its activity is regulated as follows. Inhibited by barbituric acid. Its function is as follows. Responsible for the hydrolysis of cyanuric acid, an intermediate formed during catabolism of s-triazine based compounds in herbicides such as atrazine and polymers such as melamine. Catalyzes the hydrolytic opening of the s-triazine ring of cyanuric acid (2,4,6-trihydroxy-s-triazine) to yield carbon dioxide and carboxybiuret, which spontaneously decarboxylates to biuret. In Pseudomonas sp. (strain ADP), this protein is Cyanuric acid amidohydrolase (atzD).